A 905-amino-acid polypeptide reads, in one-letter code: MTTLDHVIATHQSEWVSFNEEPPFPAHSQGGTEEHLPGLSSSPDQSESSSGENHVVDGGSQDHSHSEQDDSSEKMGLISEAASPPGSPEQPPPDLASAISNWVQFEDDTPWASTSPPHQETAETALPLTMPCWTCPSFDSLGRCPLTSESSWTTHSEDTSSPSFGCSYTDLQLINAEEQTSGQASGADSTDNSSSLQEDEEVEMEAISWQASSPAMNGHPAPPVTSARFPSWVTFDDNEVSCPLPPVTSPLKPNTPPSASVIPDVPYNSMGSFKKRDRPKSTLMNFSKVQKLDISSLNRTPSVTEASPWRATNPFLNETLQDVQPSPINPFSAFFEEQERRSQNSSISSTTGKSQRDSLIVIYQDAISFDDSSKTQSHSDAVEKLKQLQIDDPDHFGSATLPDDDPVAWIELDAHPPGSARSQPRDGWPMMLRIPEKKNIMSSRHWGPIFVKLTDTGYLQLYYEQGLEKPFREFKLEICHEISEPRLQNYDENGRIHSLRIDRVTYKEKKKYQPKPAVAHTAEREQVIKLGTTNYDDFLSFIHAVQDRLMDLPVLSMDLSTVGLNYLEEEITVDVRDEFSGIVSKGDNQILQHHVLTRIHILSFLSGLAECRLGLNDILVKGNEIVLRQDIMPTTTTKWIKLHECRFHGCVDEDVFHNSRVILFNPLDACRFELMRFRTVFAEKTLPFTLRTATSVNGAEVEVQSWLRMSTGFSANRDPLTQVPCENVMIRYPVPSEWVKNFRRESVLGEKSLKAKVNRGASFGSTSVSGSEPVMRVTLGTAKYEHAFNSIVWRINRLPDKNSASGHPHCFFCHLELGSDREVPSRFANHVNVEFSMPTTSASKASVRSISVEDKTDVRKWVNYSAHYSYQVALGSIWLMLPTPFVHPTTLPLLFLLAMLTMFAW.

3 disordered regions span residues methionine 1–threonine 121, glutamate 178–glutamate 205, and leucine 244–proline 263. Residues serine 40–serine 50 are compositionally biased toward low complexity. Basic and acidic residues predominate over residues serine 60 to glutamate 73. Residues proline 85–aspartate 94 are compositionally biased toward pro residues. Over residues glutamate 178–leucine 196 the composition is skewed to polar residues. Over residues leucine 244–proline 256 the composition is skewed to pro residues. Threonine 255 carries the phosphothreonine modification. A phosphoserine mark is found at serine 281, serine 287, and serine 302. 2 short sequence motifs (NPF) span residues asparagine 313 to phenylalanine 315 and asparagine 329 to phenylalanine 331. The region spanning glycine 427–serine 560 is the SHD domain. One can recognise an MHD domain in the interval glutamate 568 to tryptophan 878. A Phosphoserine modification is found at serine 762.

The protein belongs to the Stoned B family. As to quaternary structure, interacts with the second C2 domain of synaptotagmins SYT1 and SYT2. Interacts with EPS15, EPS15R and ITSN1. Interacts indirectly with the AP-2 adapter complex. Interacts with TOR1A and COPS4; the interaction controls STON2 protein stability. Phosphorylated in vitro by PKD. In terms of processing, neddylated; deneddylated via its interaction with the COP9 signalosome (CSN) complex through TOR1A and COPS4. Post-translationally, ubiquitinated; leading to its degradation. In terms of tissue distribution, ubiquitous.

The protein resides in the cytoplasm. It is found in the membrane. Its subcellular location is the synapse. It localises to the synaptosome. Functionally, adapter protein involved in endocytic machinery. Involved in the synaptic vesicle recycling. May facilitate clathrin-coated vesicle uncoating. The polypeptide is Stonin-2 (STON2) (Homo sapiens (Human)).